We begin with the raw amino-acid sequence, 432 residues long: Adenylosuccinate synthetase (432 aa).

Residues 12-18 (GDEGKGK) and 40-42 (GHT) each bind GTP. Asp13 functions as the Proton acceptor in the catalytic mechanism. Mg(2+) contacts are provided by Asp13 and Gly40. Residues 13-16 (DEGK), 38-41 (NAGH), Thr132, Arg146, Gln226, Thr241, and Arg305 each bind IMP. The active-site Proton donor is His41. 301 to 307 (TVTGRKR) contacts substrate. GTP contacts are provided by residues Arg307, 333 to 335 (KLD), and 415 to 417 (STS).

This sequence belongs to the adenylosuccinate synthetase family. As to quaternary structure, homodimer. The cofactor is Mg(2+).

The protein resides in the cytoplasm. It carries out the reaction IMP + L-aspartate + GTP = N(6)-(1,2-dicarboxyethyl)-AMP + GDP + phosphate + 2 H(+). Its pathway is purine metabolism; AMP biosynthesis via de novo pathway; AMP from IMP: step 1/2. In terms of biological role, plays an important role in the de novo pathway of purine nucleotide biosynthesis. Catalyzes the first committed step in the biosynthesis of AMP from IMP. The sequence is that of Adenylosuccinate synthetase from Agrobacterium fabrum (strain C58 / ATCC 33970) (Agrobacterium tumefaciens (strain C58)).